The sequence spans 147 residues: Lysozyme C, intestinal isozyme (147 aa).

The signal sequence occupies residues 1 to 18 (MKAVLILGLLLLSVTVQG). Residues 19 to 147 (KKFEKCELAR…VSSYIRGCKL (129 aa)) enclose the C-type lysozyme domain. Cystine bridges form between Cys-24-Cys-145, Cys-48-Cys-133, Cys-83-Cys-99, and Cys-95-Cys-113. Active-site residues include Glu-53 and Asp-71.

This sequence belongs to the glycosyl hydrolase 22 family.

It carries out the reaction Hydrolysis of (1-&gt;4)-beta-linkages between N-acetylmuramic acid and N-acetyl-D-glucosamine residues in a peptidoglycan and between N-acetyl-D-glucosamine residues in chitodextrins.. Its function is as follows. Lysozymes have primarily a bacteriolytic function; those in tissues and body fluids are associated with the monocyte-macrophage system and enhance the activity of immunoagents. The chain is Lysozyme C, intestinal isozyme from Bos taurus (Bovine).